Reading from the N-terminus, the 228-residue chain is Casparian strip membrane protein 2 (228 aa).

The Cytoplasmic portion of the chain corresponds to 1–65 (MSTSDAAATV…FRRADRGSRC (65 aa)). The helical transmembrane segment at 66–86 (VALLDLVLRVAAFGPALAAAI) threads the bilayer. Residues 87–113 (ATGTSDETLSVFTQFFQFHARFDDFPA) are Extracellular-facing. The helical transmembrane segment at 114 to 134 (LLFFMVANAIAAGYLVLSLPF) threads the bilayer. The Cytoplasmic portion of the chain corresponds to 135–149 (SAVVVLRPQAIGLRH). A helical membrane pass occupies residues 150–170 (LLLICDLIIAALLTAAAAAAA). Residues 171 to 201 (AIVDLAHSGNQRANWVPICMQFHGFCQRTSG) lie on the Extracellular side of the membrane. Residues 202-222 (AVVASFLAVLVLLFLVILAAF) traverse the membrane as a helical segment. Residues 223-228 (TIRKRC) lie on the Cytoplasmic side of the membrane.

It belongs to the Casparian strip membrane proteins (CASP) family. As to quaternary structure, homodimer and heterodimers.

The protein resides in the cell membrane. Regulates membrane-cell wall junctions and localized cell wall deposition. Required for establishment of the Casparian strip membrane domain (CSD) and the subsequent formation of Casparian strips, a cell wall modification of the root endodermis that determines an apoplastic barrier between the intraorganismal apoplasm and the extraorganismal apoplasm and prevents lateral diffusion. This chain is Casparian strip membrane protein 2, found in Zea mays (Maize).